A 453-amino-acid polypeptide reads, in one-letter code: Exodeoxyribonuclease 7 large subunit (453 aa).

It belongs to the XseA family. In terms of assembly, heterooligomer composed of large and small subunits.

It is found in the cytoplasm. The catalysed reaction is Exonucleolytic cleavage in either 5'- to 3'- or 3'- to 5'-direction to yield nucleoside 5'-phosphates.. Its function is as follows. Bidirectionally degrades single-stranded DNA into large acid-insoluble oligonucleotides, which are then degraded further into small acid-soluble oligonucleotides. The polypeptide is Exodeoxyribonuclease 7 large subunit (Rickettsia typhi (strain ATCC VR-144 / Wilmington)).